The primary structure comprises 297 residues: Phosphatidylserine decarboxylase proenzyme (297 aa).

Active-site charge relay system; for autoendoproteolytic cleavage activity residues include Asp-92, His-149, and Ser-254. The active-site Schiff-base intermediate with substrate; via pyruvic acid; for decarboxylase activity is Ser-254. Ser-254 bears the Pyruvic acid (Ser); by autocatalysis mark.

It belongs to the phosphatidylserine decarboxylase family. PSD-B subfamily. Prokaryotic type I sub-subfamily. Heterodimer of a large membrane-associated beta subunit and a small pyruvoyl-containing alpha subunit. The cofactor is pyruvate. Post-translationally, is synthesized initially as an inactive proenzyme. Formation of the active enzyme involves a self-maturation process in which the active site pyruvoyl group is generated from an internal serine residue via an autocatalytic post-translational modification. Two non-identical subunits are generated from the proenzyme in this reaction, and the pyruvate is formed at the N-terminus of the alpha chain, which is derived from the carboxyl end of the proenzyme. The autoendoproteolytic cleavage occurs by a canonical serine protease mechanism, in which the side chain hydroxyl group of the serine supplies its oxygen atom to form the C-terminus of the beta chain, while the remainder of the serine residue undergoes an oxidative deamination to produce ammonia and the pyruvoyl prosthetic group on the alpha chain. During this reaction, the Ser that is part of the protease active site of the proenzyme becomes the pyruvoyl prosthetic group, which constitutes an essential element of the active site of the mature decarboxylase.

The protein resides in the cell membrane. It catalyses the reaction a 1,2-diacyl-sn-glycero-3-phospho-L-serine + H(+) = a 1,2-diacyl-sn-glycero-3-phosphoethanolamine + CO2. Its pathway is phospholipid metabolism; phosphatidylethanolamine biosynthesis; phosphatidylethanolamine from CDP-diacylglycerol: step 2/2. Its function is as follows. Catalyzes the formation of phosphatidylethanolamine (PtdEtn) from phosphatidylserine (PtdSer). The polypeptide is Phosphatidylserine decarboxylase proenzyme (Bordetella parapertussis (strain 12822 / ATCC BAA-587 / NCTC 13253)).